Here is a 144-residue protein sequence, read N- to C-terminus: Maximins 3/H16 (144 aa).

An N-terminal signal peptide occupies residues 1 to 18 (MNFKYIVAVSFLIASAYA). Propeptides lie at residues 19-43 (RSVQ…REIR) and 73-122 (RTAE…KKEK). Isoleucine amide is present on isoleucine 143.

This sequence belongs to the bombinin family. Expressed by the skin glands.

It localises to the secreted. In terms of biological role, maximin-3 shows antibacterial activity against both Gram-positive and Gram-negative bacteria. It also shows antimicrobial activity against the fungus C.albicans, but not against A.flavus nor P.uticale. It has little hemolytic activity. It possess a significant cytotoxicity against tumor cell lines. It possess a significant anti-HIV activity. It shows high spermicidal activity. Maximin-H16 shows antimicrobial activity against bacteria and against the fungus C.albicans. Shows strong hemolytic activity. The chain is Maximins 3/H16 from Bombina maxima (Giant fire-bellied toad).